We begin with the raw amino-acid sequence, 232 residues long: Large ribosomal subunit protein uL1 (232 aa).

The protein belongs to the universal ribosomal protein uL1 family. In terms of assembly, part of the 50S ribosomal subunit.

Binds directly to 23S rRNA. The L1 stalk is quite mobile in the ribosome, and is involved in E site tRNA release. In terms of biological role, protein L1 is also a translational repressor protein, it controls the translation of the L11 operon by binding to its mRNA. The sequence is that of Large ribosomal subunit protein uL1 from Ruegeria sp. (strain TM1040) (Silicibacter sp.).